Here is a 173-residue protein sequence, read N- to C-terminus: Large ribosomal subunit protein uL10 (173 aa).

The protein belongs to the universal ribosomal protein uL10 family. In terms of assembly, part of the ribosomal stalk of the 50S ribosomal subunit. The N-terminus interacts with L11 and the large rRNA to form the base of the stalk. The C-terminus forms an elongated spine to which L12 dimers bind in a sequential fashion forming a multimeric L10(L12)X complex.

Forms part of the ribosomal stalk, playing a central role in the interaction of the ribosome with GTP-bound translation factors. The chain is Large ribosomal subunit protein uL10 from Acidithiobacillus ferrooxidans (strain ATCC 23270 / DSM 14882 / CIP 104768 / NCIMB 8455) (Ferrobacillus ferrooxidans (strain ATCC 23270)).